The chain runs to 669 residues: DNA ligase (669 aa).

Residues 34-38 (DAEYD), 83-84 (SL), and glutamate 114 each bind NAD(+). Catalysis depends on lysine 116, which acts as the N6-AMP-lysine intermediate. Residues arginine 137, glutamate 171, lysine 287, and lysine 311 each contribute to the NAD(+) site. Zn(2+) is bound by residues cysteine 405, cysteine 408, cysteine 423, and cysteine 428. In terms of domain architecture, BRCT spans 591–669 (NVESYFAGKT…EERFLQELNK (79 aa)).

Belongs to the NAD-dependent DNA ligase family. LigA subfamily. The cofactor is Mg(2+). It depends on Mn(2+) as a cofactor.

The catalysed reaction is NAD(+) + (deoxyribonucleotide)n-3'-hydroxyl + 5'-phospho-(deoxyribonucleotide)m = (deoxyribonucleotide)n+m + AMP + beta-nicotinamide D-nucleotide.. Functionally, DNA ligase that catalyzes the formation of phosphodiester linkages between 5'-phosphoryl and 3'-hydroxyl groups in double-stranded DNA using NAD as a coenzyme and as the energy source for the reaction. It is essential for DNA replication and repair of damaged DNA. The protein is DNA ligase of Bacillus anthracis (strain A0248).